Consider the following 432-residue polypeptide: Glutamyl-tRNA reductase (432 aa).

Substrate contacts are provided by residues 55–58, Ser114, 119–121, and Gln125; these read TCNR and ETQ. Cys56 functions as the Nucleophile in the catalytic mechanism. 194 to 199 serves as a coordination point for NADP(+); sequence GAGEMI.

Belongs to the glutamyl-tRNA reductase family. As to quaternary structure, homodimer.

The enzyme catalyses (S)-4-amino-5-oxopentanoate + tRNA(Glu) + NADP(+) = L-glutamyl-tRNA(Glu) + NADPH + H(+). The protein operates within porphyrin-containing compound metabolism; protoporphyrin-IX biosynthesis; 5-aminolevulinate from L-glutamyl-tRNA(Glu): step 1/2. Its function is as follows. Catalyzes the NADPH-dependent reduction of glutamyl-tRNA(Glu) to glutamate 1-semialdehyde (GSA). This is Glutamyl-tRNA reductase from Burkholderia ambifaria (strain MC40-6).